The sequence spans 414 residues: Serine hydroxymethyltransferase (414 aa).

Residues Leu-121 and 125-127 contribute to the (6S)-5,6,7,8-tetrahydrofolate site; that span reads GHL. The residue at position 229 (Lys-229) is an N6-(pyridoxal phosphate)lysine.

It belongs to the SHMT family. Homodimer. Requires pyridoxal 5'-phosphate as cofactor.

It is found in the cytoplasm. The enzyme catalyses (6R)-5,10-methylene-5,6,7,8-tetrahydrofolate + glycine + H2O = (6S)-5,6,7,8-tetrahydrofolate + L-serine. The protein operates within one-carbon metabolism; tetrahydrofolate interconversion. It participates in amino-acid biosynthesis; glycine biosynthesis; glycine from L-serine: step 1/1. Functionally, catalyzes the reversible interconversion of serine and glycine with tetrahydrofolate (THF) serving as the one-carbon carrier. This reaction serves as the major source of one-carbon groups required for the biosynthesis of purines, thymidylate, methionine, and other important biomolecules. Also exhibits THF-independent aldolase activity toward beta-hydroxyamino acids, producing glycine and aldehydes, via a retro-aldol mechanism. The polypeptide is Serine hydroxymethyltransferase (Thiobacillus denitrificans (strain ATCC 25259 / T1)).